Consider the following 352-residue polypeptide: Photosystem II D2 protein (352 aa).

Position 2 is an N-acetylthreonine (threonine 2). Threonine 2 is subject to Phosphothreonine. A helical transmembrane segment spans residues 40 to 60; sequence CAYFAVGGWLTGTTFVTSWYT. Histidine 117 contacts chlorophyll a. The chain crosses the membrane as a helical span at residues 124–140; the sequence is GFMLRQFEIARAIGLRP. Positions 129 and 142 each coordinate pheophytin a. The helical transmembrane segment at 152-165 threads the bilayer; the sequence is VFVSVFLIYPLGQS. Position 197 (histidine 197) interacts with chlorophyll a. Residues 207-227 form a helical membrane-spanning segment; that stretch reads AALLCAIHGATVENTLFEDGD. A plastoquinone is bound by residues histidine 214 and phenylalanine 261. Histidine 214 contacts Fe cation. Histidine 268 serves as a coordination point for Fe cation. A helical transmembrane segment spans residues 278-294; sequence GLWMSAIGVVGLALNLR.

Belongs to the reaction center PufL/M/PsbA/D family. As to quaternary structure, PSII is composed of 1 copy each of membrane proteins PsbA, PsbB, PsbC, PsbD, PsbE, PsbF, PsbH, PsbI, PsbJ, PsbK, PsbL, PsbM, PsbT, PsbX, PsbY, PsbZ, Psb30/Ycf12, at least 3 peripheral proteins of the oxygen-evolving complex and a large number of cofactors. It forms dimeric complexes. It depends on The D1/D2 heterodimer binds P680, chlorophylls that are the primary electron donor of PSII, and subsequent electron acceptors. It shares a non-heme iron and each subunit binds pheophytin, quinone, additional chlorophylls, carotenoids and lipids. There is also a Cl(-1) ion associated with D1 and D2, which is required for oxygen evolution. The PSII complex binds additional chlorophylls, carotenoids and specific lipids. as a cofactor.

It localises to the plastid. The protein resides in the chloroplast thylakoid membrane. It carries out the reaction 2 a plastoquinone + 4 hnu + 2 H2O = 2 a plastoquinol + O2. Photosystem II (PSII) is a light-driven water:plastoquinone oxidoreductase that uses light energy to abstract electrons from H(2)O, generating O(2) and a proton gradient subsequently used for ATP formation. It consists of a core antenna complex that captures photons, and an electron transfer chain that converts photonic excitation into a charge separation. The D1/D2 (PsbA/PsbD) reaction center heterodimer binds P680, the primary electron donor of PSII as well as several subsequent electron acceptors. D2 is needed for assembly of a stable PSII complex. This Nephroselmis olivacea (Green alga) protein is Photosystem II D2 protein.